Here is a 283-residue protein sequence, read N- to C-terminus: Phosphatidylglycerol--prolipoprotein diacylglyceryl transferase (283 aa).

A run of 7 helical transmembrane segments spans residues 18-38 (LFGH…IILG), 59-79 (LAVY…VLFY), 91-111 (IFVT…IIIA), 124-144 (ILWV…MIRL), 185-205 (TQIY…WLYW), 213-233 (YSGL…FIIE), and 251-271 (GLNM…WLII). Arg143 is a binding site for a 1,2-diacyl-sn-glycero-3-phospho-(1'-sn-glycerol).

It belongs to the Lgt family.

Its subcellular location is the cell inner membrane. It carries out the reaction L-cysteinyl-[prolipoprotein] + a 1,2-diacyl-sn-glycero-3-phospho-(1'-sn-glycerol) = an S-1,2-diacyl-sn-glyceryl-L-cysteinyl-[prolipoprotein] + sn-glycerol 1-phosphate + H(+). The protein operates within protein modification; lipoprotein biosynthesis (diacylglyceryl transfer). In terms of biological role, catalyzes the transfer of the diacylglyceryl group from phosphatidylglycerol to the sulfhydryl group of the N-terminal cysteine of a prolipoprotein, the first step in the formation of mature lipoproteins. The sequence is that of Phosphatidylglycerol--prolipoprotein diacylglyceryl transferase from Porphyromonas gingivalis (strain ATCC 33277 / DSM 20709 / CIP 103683 / JCM 12257 / NCTC 11834 / 2561).